Reading from the N-terminus, the 89-residue chain is Small ribosomal subunit protein uS17 (89 aa).

This sequence belongs to the universal ribosomal protein uS17 family. In terms of assembly, part of the 30S ribosomal subunit.

In terms of biological role, one of the primary rRNA binding proteins, it binds specifically to the 5'-end of 16S ribosomal RNA. The polypeptide is Small ribosomal subunit protein uS17 (Leptospira interrogans serogroup Icterohaemorrhagiae serovar Lai (strain 56601)).